The chain runs to 171 residues: Methyl-coenzyme M reductase operon protein D (171 aa).

In terms of assembly, MCR is composed of three subunits: alpha, beta, and gamma. The function of proteins C and D is not known.

This is Methyl-coenzyme M reductase operon protein D (mcrD) from Methanosarcina barkeri (strain Fusaro / DSM 804).